The primary structure comprises 677 residues: Beta-galactosidase BgaA (677 aa).

Arginine 112 lines the substrate pocket. Cysteine 116 contributes to the Zn(2+) binding site. Residue asparagine 150 participates in substrate binding. Glutamate 151 functions as the Proton donor in the catalytic mechanism. Zn(2+) contacts are provided by cysteine 156, cysteine 158, and cysteine 161. Glutamate 309 serves as the catalytic Nucleophile. Residues tryptophan 317 and glutamate 357–histidine 360 each bind substrate.

Belongs to the glycosyl hydrolase 42 family. In terms of assembly, dimer.

The enzyme catalyses Hydrolysis of terminal non-reducing beta-D-galactose residues in beta-D-galactosides.. With respect to regulation, no activity is lost during treatment with 20 or 100 mM EDTA in Z buffer for 3 hours at 0 degrees Celsius, nor is activity greatly stimulated by the addition of cations. Inhibited by 1 mM zinc and 1 mM copper, the levels of activity decrease to 10% of the untreated control. Nickel, cobalt and manganese at concentrations of 10 mM decrease enzyme activity to either 40% (for nickel and cobalt) or 60% (for manganese) of the activity in untreated controls. No change in enzyme activity in the presence of calcium and magnesium at concentrations up to 50 mM. EDTA-treated enzyme exhibits a slight increase in relative specific activity when it is assayed in the presence of 50 mM NaCl or 50 mM KCl, it does not exhibit enhanced activity at concentrations greater than 250 mM. Maintains between 20 and 40% of activity in the presence of 4 M NaCl or 4 M KCl, and it is more active in the presence of KCl than in the presence of NaCl. Retains 50% of activity in the presence of 3 M KCl or 2.5 M NaCl. Hydrolyzes o-nitrophenyl-beta-D-galactopyranoside (ONPG), p-nitrophenyl-beta-D-galactopyranoside (PNPG), 5-bromo-4-chloro-3-indoyl-beta-D-galactosde (X-gal), o-nitrophenyl-beta-D-fucopyranoside (ONPF) and p-nitrophenyl-beta-D-fucopyranoside (PNPF) with greatest activity towards ONPG and PNPG and low levels of activity with ONPF and PNPF. Detectable, but very low levels of activity towards p-nitrophenyl-beta-lactose (PNPL), p-nitrophenyl-beta-cellobiose (PNPC), p-nitrophenyl-alpha-galactopyranoside (PNP-alpha-G), and p-nitrophenyl-beta-xylopyranoside (PNPX). The chain is Beta-galactosidase BgaA from Planococcus sp. (strain 'SOS Orange').